A 151-amino-acid polypeptide reads, in one-letter code: D-aminoacyl-tRNA deacylase (151 aa).

The short motif at 137–138 (GP) is the Gly-cisPro motif, important for rejection of L-amino acids element.

This sequence belongs to the DTD family. Homodimer.

Its subcellular location is the cytoplasm. It catalyses the reaction glycyl-tRNA(Ala) + H2O = tRNA(Ala) + glycine + H(+). The catalysed reaction is a D-aminoacyl-tRNA + H2O = a tRNA + a D-alpha-amino acid + H(+). An aminoacyl-tRNA editing enzyme that deacylates mischarged D-aminoacyl-tRNAs. Also deacylates mischarged glycyl-tRNA(Ala), protecting cells against glycine mischarging by AlaRS. Acts via tRNA-based rather than protein-based catalysis; rejects L-amino acids rather than detecting D-amino acids in the active site. By recycling D-aminoacyl-tRNA to D-amino acids and free tRNA molecules, this enzyme counteracts the toxicity associated with the formation of D-aminoacyl-tRNA entities in vivo and helps enforce protein L-homochirality. The sequence is that of D-aminoacyl-tRNA deacylase from Azoarcus sp. (strain BH72).